The sequence spans 99 residues: Integration host factor subunit alpha (99 aa).

It belongs to the bacterial histone-like protein family. As to quaternary structure, heterodimer of an alpha and a beta chain.

Functionally, this protein is one of the two subunits of integration host factor, a specific DNA-binding protein that functions in genetic recombination as well as in transcriptional and translational control. This chain is Integration host factor subunit alpha, found in Pseudoalteromonas translucida (strain TAC 125).